Reading from the N-terminus, the 328-residue chain is MIRRVSTTSCLSATAFRSFTKWSFKSSQFHGESLDSSVSPLLIPGFHVFHCPDVVGIVAKLSDCIAAKGGNILGYDVFVPENKNVFYSRSEFIFDPVKWPRRQMDEDFQTIAQKFSALSSVVRVPSLDPKYKIALLLSKQDHCLVEMLHKWQDGKLPVDITCVISNHERAPNTHVMRFLQRHGISYHYLPTTDQNKIEEEILELVKGTDFLVLARYMQLLSGNFLKGYGKDVINIHHGLLPSFKGRNPVKQAFDAGVKLIGATTHFVTEELDSGPIIEQMVERVSHRDNLRSFVQKSEDLEKKCLMKAIKSYCELRVLPYGTQRTVVF.

A mitochondrion-targeting transit peptide spans 1-12 (MIRRVSTTSCLS). An ACT domain is found at 46 to 129 (FHVFHCPDVV…SVVRVPSLDP (84 aa)). Residue Asp272 is part of the active site.

This sequence belongs to the PurU family. As to expression, expressed in leaves, cotyledons, roots, seeds and flowers.

Its subcellular location is the mitochondrion. It catalyses the reaction (6R)-10-formyltetrahydrofolate + H2O = (6S)-5,6,7,8-tetrahydrofolate + formate + H(+). Functionally, deformylase involved in photorespiration. Prevents excessive accumulation of 5-formyl tetrahydrofolate (THF), a potent inhibitor of the Gly decarboxylase/Ser hydroxymethyltransferase complex. In Arabidopsis thaliana (Mouse-ear cress), this protein is Formyltetrahydrofolate deformylase 2, mitochondrial (PURU2).